A 431-amino-acid polypeptide reads, in one-letter code: E3 ubiquitin-protein ligase RNF128 (431 aa).

The N-terminal stretch at M1–G38 is a signal peptide. 3 N-linked (GlcNAc...) asparagine glycosylation sites follow: N48, N59, and N101. The PA domain maps to S75 to I186. The helical transmembrane segment at I211–F231 threads the bilayer. An RING-type; atypical zinc finger spans residues C280 to K321. Residues V345–S354 are compositionally biased toward polar residues. Positions V345–S431 are disordered.

Auto-ubiquitinated. Controls the development of T-cell clonal anergy by ubiquitination.

The protein localises to the cytoplasm. It localises to the endomembrane system. It is found in the cytoskeleton. Its subcellular location is the perinuclear region. It catalyses the reaction S-ubiquitinyl-[E2 ubiquitin-conjugating enzyme]-L-cysteine + [acceptor protein]-L-lysine = [E2 ubiquitin-conjugating enzyme]-L-cysteine + N(6)-ubiquitinyl-[acceptor protein]-L-lysine.. The protein operates within protein modification; protein ubiquitination. Its function is as follows. E3 ubiquitin-protein ligase that catalyzes 'Lys-27', 'Lys-48'- or 'Lys-63'-linked polyubiquitin chains formation and plays a role in different biological processes such as modulation of immune response, cytoskeletal dynamics or protein homeostasis. Inhibits IL2 and IL4 transcription, thereby playing an important role in the induction of the anergic phenotype, a long-term stable state of T-lymphocyte unresponsiveness to antigenic stimulation associated with the blockade of interleukin production. Ubiquitinates ARPC5 with 'Lys-48' linkages and COR1A with 'Lys-63' linkages leading to their degradation, down-regulation of these cytoskeletal components results in impaired lamellipodium formation and reduced accumulation of F-actin at the immunological synapse. Functions in the patterning of the dorsal ectoderm; sensitizes ectoderm to respond to neural-inducing signals. Plays a positive role in innate immune response by promoting 'Lys-63'-linked ubiquitination of TBK1 after RNA- or DNA-virus infection. Regulates alveolar macrophage activation and neutrophil infiltration by interacting with TLR4, targeting it for degradation, and inhibiting NF-kappa-B activation, hence decreasing pro-inflammatory cytokines. Negatively regulates the IL-3/STAT5 signaling pathway by facilitating 'Lys-27'-linked polyubiquitination of IL3RA leading to its degradation via lysosomal pathway. Directly regulates the N-glycosylation process in the endoplasmic reticulum by targeting the glycosyl-transferase RPN1 for ubiquitination and degradation. Other substrates targeted for degradation by RNF128 include transmembrane proteins CD40L, CD83 or the tetraspanin CD151. The protein is E3 ubiquitin-protein ligase RNF128 (RNF128) of Bos taurus (Bovine).